The primary structure comprises 388 residues: Succinate--CoA ligase [ADP-forming] subunit beta (388 aa).

In terms of domain architecture, ATP-grasp spans 9–244; sequence KQLFARYGLP…QSQEDPREAQ (236 aa). ATP-binding positions include Lys46, 53–55, Glu99, Thr102, and Glu107; that span reads GRG. Residues Asn199 and Asp213 each coordinate Mg(2+). Residues Asn264 and 321–323 contribute to the substrate site; that span reads GIV.

It belongs to the succinate/malate CoA ligase beta subunit family. In terms of assembly, heterotetramer of two alpha and two beta subunits. It depends on Mg(2+) as a cofactor.

The catalysed reaction is succinate + ATP + CoA = succinyl-CoA + ADP + phosphate. The enzyme catalyses GTP + succinate + CoA = succinyl-CoA + GDP + phosphate. The protein operates within carbohydrate metabolism; tricarboxylic acid cycle; succinate from succinyl-CoA (ligase route): step 1/1. Its function is as follows. Succinyl-CoA synthetase functions in the citric acid cycle (TCA), coupling the hydrolysis of succinyl-CoA to the synthesis of either ATP or GTP and thus represents the only step of substrate-level phosphorylation in the TCA. The beta subunit provides nucleotide specificity of the enzyme and binds the substrate succinate, while the binding sites for coenzyme A and phosphate are found in the alpha subunit. The protein is Succinate--CoA ligase [ADP-forming] subunit beta of Salmonella choleraesuis (strain SC-B67).